The primary structure comprises 92 residues: uncharacterized protein (92 aa).

Residues 65 to 86 (AVWIFWLCFLVSGLSRAFLVYF) traverse the membrane as a helical segment.

The protein resides in the membrane. This is an uncharacterized protein from Treponema pallidum (strain Nichols).